A 442-amino-acid chain; its full sequence is F-box/FBD/LRR-repeat protein At2g26030 (442 aa).

The F-box domain occupies 3 to 49 (CDRICELPDSLLTQVLSYLPTIDSVKTSVLSKRWEFLWLRVPVLDLK). LRR repeat units follow at residues 128-160 (CNTL…HLED), 162-187 (WYYD…VLIR), 188-214 (PIDF…RLTF), 234-260 (YLNF…DIDS), 278-309 (KRDI…DRYS), and 324-352 (QAAV…ILDF). Residues 358-410 (PEQDGLTYVPQCLLSSLECVEIRELIMGEETGEKLVRYFLKNSVVLKKLILRL) enclose the FBD domain.

The chain is F-box/FBD/LRR-repeat protein At2g26030 from Arabidopsis thaliana (Mouse-ear cress).